Here is a 484-residue protein sequence, read N- to C-terminus: Poly(A) RNA polymerase GLD2 (484 aa).

Ser62 and Ser69 each carry phosphoserine. Residues 72–97 (FRGRKRLSDEKNLPLDGKRQRFHSPH) are disordered. The Nuclear localization signal motif lies at 76 to 92 (KRLSDEKNLPLDGKRQR). Residues 77-90 (RLSDEKNLPLDGKR) show a composition bias toward basic and acidic residues. Ser95 is modified (phosphoserine). Positions 213 and 215 each coordinate Mg(2+). Residues 386-440 (NLGDLLLGFLKYYATEFDWNSQMISVREAKAIPRPDGIEWRNKYICVEEPFDGTN) enclose the PAP-associated domain.

The protein belongs to the DNA polymerase type-B-like family. GLD2 subfamily. As to quaternary structure, interacts with CPEB1, CPEB2, CPSF1 and PABPC1. Interacts with QKI isoform QKI7; promoting recruitment to miRNA miR-122 and miR-122 stabilization. It depends on Mg(2+) as a cofactor. Mn(2+) serves as cofactor. In terms of tissue distribution, expressed in brain. Within brain, it is expressed in cerebellum, hippocampus and medulla.

Its subcellular location is the cytoplasm. The protein resides in the nucleus. The catalysed reaction is RNA(n) + ATP = RNA(n)-3'-adenine ribonucleotide + diphosphate. Its function is as follows. Cytoplasmic poly(A) RNA polymerase that adds successive AMP monomers to the 3'-end of specific RNAs, forming a poly(A) tail. In contrast to the canonical nuclear poly(A) RNA polymerase, it only adds poly(A) to selected cytoplasmic mRNAs. Does not play a role in replication-dependent histone mRNA degradation. Adds a single nucleotide to the 3' end of specific miRNAs, monoadenylation stabilizes and prolongs the activity of some but not all miRNAs. The polypeptide is Poly(A) RNA polymerase GLD2 (Homo sapiens (Human)).